The primary structure comprises 202 residues: Imidazole glycerol phosphate synthase subunit HisH 2 (202 aa).

The 202-residue stretch at 1–202 (MIAIIDYGMG…KLMENFIKQA (202 aa)) folds into the Glutamine amidotransferase type-1 domain. Residue Cys-80 is the Nucleophile of the active site. Residues His-183 and Glu-185 contribute to the active site.

Heterodimer of HisH and HisF.

It localises to the cytoplasm. The catalysed reaction is 5-[(5-phospho-1-deoxy-D-ribulos-1-ylimino)methylamino]-1-(5-phospho-beta-D-ribosyl)imidazole-4-carboxamide + L-glutamine = D-erythro-1-(imidazol-4-yl)glycerol 3-phosphate + 5-amino-1-(5-phospho-beta-D-ribosyl)imidazole-4-carboxamide + L-glutamate + H(+). The enzyme catalyses L-glutamine + H2O = L-glutamate + NH4(+). Its pathway is amino-acid biosynthesis; L-histidine biosynthesis; L-histidine from 5-phospho-alpha-D-ribose 1-diphosphate: step 5/9. In terms of biological role, IGPS catalyzes the conversion of PRFAR and glutamine to IGP, AICAR and glutamate. The HisH subunit provides the glutamine amidotransferase activity that produces the ammonia necessary to HisF for the synthesis of IGP and AICAR. The protein is Imidazole glycerol phosphate synthase subunit HisH 2 (hisH2) of Methanococcus maripaludis (strain DSM 14266 / JCM 13030 / NBRC 101832 / S2 / LL).